A 588-amino-acid chain; its full sequence is Probable G-protein coupled receptor 162 (588 aa).

Topologically, residues 1–17 are extracellular; that stretch reads MARGGAGAEEASLRSNA. Residues 18–38 traverse the membrane as a helical segment; that stretch reads LSWLACGLLALLANAWIILSI. Topologically, residues 39–49 are cytoplasmic; it reads SAKQQKHKPLE. Residues 50–70 form a helical membrane-spanning segment; that stretch reads LLLCFLAGTHILMAAVPLTTF. Topologically, residues 71-91 are extracellular; the sequence is AVVQLRRQASSDYDWNESICK. A glycan (N-linked (GlcNAc...) asparagine) is linked at Asn-86. A helical membrane pass occupies residues 92–112; that stretch reads VFVSTYYTLALATCFTVASLS. Residues 113 to 133 lie on the Cytoplasmic side of the membrane; the sequence is YHRMWMVRWPVNYRLSNAKKQ. A helical transmembrane segment spans residues 134–154; sequence ALHAVMGIWMVSFILSTLPSI. Residues 155-174 are Extracellular-facing; the sequence is GWHNNGERYYARGCQFIVSK. The chain crosses the membrane as a helical span at residues 175–195; it reads IGLGFGVCFSLLLLGGIVMGL. Residues 196–275 lie on the Cytoplasmic side of the membrane; it reads VCVAITFYQT…SLQVTNLVSA (80 aa). A helical membrane pass occupies residues 276 to 296; sequence IVFLYDSLTGVPILVVSFFSL. Residues 297–303 lie on the Extracellular side of the membrane; that stretch reads KSDSAPP. A helical membrane pass occupies residues 304–324; that stretch reads WMVLAVLWCSMAQTLLLPSFI. Residues 325–588 are Cytoplasmic-facing; the sequence is WSCERYRADV…GNPIFPQLTL (264 aa). Phosphoserine is present on residues Ser-413 and Ser-435. Disordered regions lie at residues 445–474 and 511–550; these read QSRA…AEGG and ETPL…AVGL. Over residues 530–546 the composition is skewed to low complexity; the sequence is PLGLSPRRLSLGSPESR.

This sequence belongs to the G-protein coupled receptor 1 family.

It localises to the cell membrane. Functionally, orphan receptor. This Homo sapiens (Human) protein is Probable G-protein coupled receptor 162 (GPR162).